The following is a 251-amino-acid chain: Triosephosphate isomerase (251 aa).

A substrate-binding site is contributed by asparagine 9 to lysine 11. The active-site Electrophile is histidine 94. The Proton acceptor role is filled by glutamate 166. Substrate-binding positions include glycine 172, serine 211, and glycine 232–glycine 233.

This sequence belongs to the triosephosphate isomerase family. In terms of assembly, homodimer.

The protein localises to the cytoplasm. It catalyses the reaction D-glyceraldehyde 3-phosphate = dihydroxyacetone phosphate. Its pathway is carbohydrate biosynthesis; gluconeogenesis. It functions in the pathway carbohydrate degradation; glycolysis; D-glyceraldehyde 3-phosphate from glycerone phosphate: step 1/1. Its function is as follows. Involved in the gluconeogenesis. Catalyzes stereospecifically the conversion of dihydroxyacetone phosphate (DHAP) to D-glyceraldehyde-3-phosphate (G3P). The chain is Triosephosphate isomerase from Xanthomonas euvesicatoria pv. vesicatoria (strain 85-10) (Xanthomonas campestris pv. vesicatoria).